We begin with the raw amino-acid sequence, 136 residues long: Large ribosomal subunit protein uL16 (136 aa).

This sequence belongs to the universal ribosomal protein uL16 family. As to quaternary structure, part of the 50S ribosomal subunit.

Functionally, binds 23S rRNA and is also seen to make contacts with the A and possibly P site tRNAs. This Photobacterium profundum (strain SS9) protein is Large ribosomal subunit protein uL16.